The chain runs to 1625 residues: E3 ubiquitin-protein ligase KEG (1625 aa).

Residues 10 to 56 form an RING-type zinc finger; it reads CSVCHTRYNEDERVPLLLQCGHGFCKDCLSKMFSTSSDTTLTCPRCR. The segment covering 91–106 has biased composition (acidic residues); the sequence is YTDDEDDDDEEDGSDE. The disordered stretch occupies residues 91–110; that stretch reads YTDDEDDDDEEDGSDEDGAR. Residues 141–427 form the Protein kinase domain; that stretch reads RQIGEESSSG…TFNAMLATFL (287 aa). ATP-binding positions include 147 to 155 and lysine 176; that span reads SSSGGFGGV. 11 ANK repeats span residues 467-496, 510-540, 544-573, 579-608, 612-641, 647-676, 685-720, 725-754, 758-787, 791-826, and 832-863; these read DNPN…AGGG, DGQS…NVDI, DGDP…NVRS, SGPS…DPNA, EGET…SRSM, KCLT…PEEI, PVGT…DPTA, HGRT…NANI, HNTI…DCNI, EGDN…AVDV, and KTVR…HLSP.

As to quaternary structure, interacts with ABI5 and EDR1. Post-translationally, autophosphotylated and autoubiquitinated in vitro. Phosphorylation enhances self-ubiquitination. In terms of processing, autoubiquitinated in response to abscisic acid (ABA) and subsequently targeted to proteolysis. Expressed in all tissues of young seedlings. In flowering plants, only detected in the youngest part of the stem, anthers and the receptacle of immature siliques. Not found in mature leave, older parts of the stem, flower parts other than anthers or mature siliques.

The protein localises to the golgi apparatus. The protein resides in the trans-Golgi network. Its subcellular location is the early endosome. It catalyses the reaction L-seryl-[protein] + ATP = O-phospho-L-seryl-[protein] + ADP + H(+). The catalysed reaction is L-threonyl-[protein] + ATP = O-phospho-L-threonyl-[protein] + ADP + H(+). The enzyme catalyses S-ubiquitinyl-[E2 ubiquitin-conjugating enzyme]-L-cysteine + [acceptor protein]-L-lysine = [E2 ubiquitin-conjugating enzyme]-L-cysteine + N(6)-ubiquitinyl-[acceptor protein]-L-lysine.. It participates in protein modification; protein ubiquitination. Functionally, mediates E2-dependent protein ubiquitination. Acts as a negative regulator of abscisic acid signaling. Required for ABI5 degradation, by mediating its ubiquitination. Together with EDR1, may regulate endocytic trafficking and/or the formation of signaling complexes on trans-Golgi network (TGN)/ early endosome (EE) vesicles during stress responses. The chain is E3 ubiquitin-protein ligase KEG (KEG) from Arabidopsis thaliana (Mouse-ear cress).